The sequence spans 526 residues: Cytochrome P450 monooxygenase ucsK (526 aa).

The chain crosses the membrane as a helical span at residues P7–Y27. The N-linked (GlcNAc...) asparagine glycan is linked to N403. C467 is a heme binding site.

It belongs to the cytochrome P450 family. The cofactor is heme.

It localises to the membrane. It participates in mycotoxin biosynthesis. Its function is as follows. Cytochrome P450 monooxygenase; part of the gene cluster that mediates the biosynthesis of UCS1025A, a member of the pyrrolizidinone family that acts as a strong telomerase inhibitor and displays potent antibacterial and antitumor properties. These compounds share a hemiaminal-containing pyrrolizidinone core fused with a gamma-lactone, giving a furopyrrolizidine that is connected to a decalin fragment. The polyketide synthase module (PKS) of the PKS-NRPS ucsA is responsible for the synthesis of the polyketide backbone via the condensation of an acetyl-CoA starter unit with 6 malonyl-CoA units. The downstream nonribosomal peptide synthetase (NRPS) module then amidates the carboxyl end of the polyketide with a 2S,3S-methylproline derived from L-isoleucine by the 2-oxoglutarate-dependent dioxygenase ucsF which converts L-isoleucine to (4S,5S)-4-methylpyrroline-5-carboxylate that is further converted to 2S,3S-methylproline by the pyrroline-5-carboxylate reductase ucsG. Reductive release of the completed aminoacyl polyketide from the assembly line can form the 3-pyrrolin-2-one structure via an intramolecular Knoevenagel reaction. Because ucsA lacks a designated enoylreductase (ER) domain, the required activity is provided the enoyl reductase ucsL. This keto acyclic precursor is the substrate of the Diels-Alderase ucsH, that catalyzes the Diels-Alder cycloaddition. Oxidation of the 3S-methyl group to a carboxylate by the cytochrome P450 monooxygenase ucsK allows an oxa-Michael cyclization that might involve the reductase/dehydrogenase ucsI and which furnishes the furopyrrolizidine. The oxidase ucsJ likely plays a critical role in stereoselective reduction of the C5-C6 double bond to afford the required R-configured carboxylate group. Further enolization and oxidation at C5 by an unidentified enzyme affords the last intermediate that can undergo oxa-Michael cyclization to yield UCS1025A. In Acremonium sp, this protein is Cytochrome P450 monooxygenase ucsK.